The following is a 489-amino-acid chain: Protein LMBR1L (489 aa).

At 1 to 21 (MEAADYEVLSVREQLFHDRVR) the chain is on the extracellular side. Residues 1-59 (MEAADYEVLSVREQLFHDRVRECIISILLFATLYILCHIFLTRFKKPAEFTTVDDEDAT) are interaction with LGB. Residues 1–76 (MEAADYEVLS…LCTFTLAVAL (76 aa)) are LCN1-binding. Residues 22-42 (ECIISILLFATLYILCHIFLT) traverse the membrane as a helical segment. The Cytoplasmic segment spans residues 43 to 66 (RFKKPAEFTTVDDEDATVNKIALE). The chain crosses the membrane as a helical span at residues 67-87 (LCTFTLAVALGAVLLLPFSII). At 88 to 114 (SNEVLLSLPRNYYIQWLNGSLIHGLWN) the chain is on the extracellular side. Residues 115–135 (LVFLFSNLSLVFLMPFAYFFT) traverse the membrane as a helical segment. Over 136-154 (ESEGFAGSRKGVLGRVYET) the chain is Cytoplasmic. The helical transmembrane segment at 155–175 (VVMLILLTLLVLGMVWVASAI) threads the bilayer. Residues 176 to 196 (VDNDKASRESLYDFWEYYLPY) lie on the Extracellular side of the membrane. A helical transmembrane segment spans residues 197–217 (LYSCISFLGVLLLLVCTPLGL). The Cytoplasmic segment spans residues 218–305 (ARMFSVTGKL…NLGYPLAMLC (88 aa)). A helical membrane pass occupies residues 306–326 (LLVLTGLSVLIVAVHILELLI). Residues 327–350 (DEAAMPRGMQDAALGQASFSKLGS) lie on the Extracellular side of the membrane. A helical transmembrane segment spans residues 351–371 (FGAIIQVVLIFYLMVSSVVGF). At 372 to 388 (YSSPLFGSLRPRWHDTS) the chain is on the cytoplasmic side. A helical transmembrane segment spans residues 389–409 (MTQIIGNCVCLLVLSSALPVF). Topologically, residues 410–431 (SRTLGLTRFDLLGDFGRFNWLG) are extracellular. A helical transmembrane segment spans residues 432–452 (NFYIVFLYNAAFAGLTTLCLV). Residues 453 to 489 (KTFTAAVRAELIRAFGLDRLPLPVSGFPRASRKKQHQ) lie on the Cytoplasmic side of the membrane.

It belongs to the LIMR family. As to quaternary structure, dimer. Can also form higher oligomers. Interacts with LCN1; this interaction mediates the endocytosis of LCN1. Interacts with UBAC2, FAF2, VCP, AMFR, ZNRF3, CTNNB1, LRP6, GSK3B, FZD6, DVL2 and RNF43. Interacts with GSK3A. Interaction with LGB and SCGB1A1 is controversial. Highly expressed in the bone marrow, thymus, spleen and lymphocytes.

It is found in the cell membrane. The protein localises to the endoplasmic reticulum membrane. Plays an essential role in lymphocyte development by negatively regulating the canonical Wnt signaling pathway. In association with UBAC2 and E3 ubiquitin-protein ligase AMFR, promotes the ubiquitin-mediated degradation of CTNNB1 and Wnt receptors FZD6 and LRP6. LMBR1L stabilizes the beta-catenin destruction complex that is required for regulating CTNNB1 levels. Acts as a LCN1 receptor and can mediate its endocytosis. The chain is Protein LMBR1L (Lmbr1l) from Mus musculus (Mouse).